A 185-amino-acid polypeptide reads, in one-letter code: Peptidyl-tRNA hydrolase (185 aa).

Position 14 (Y14) interacts with tRNA. H19 acts as the Proton acceptor in catalysis. TRNA is bound by residues F64, N66, and N112.

Belongs to the PTH family. In terms of assembly, monomer.

The protein localises to the cytoplasm. It carries out the reaction an N-acyl-L-alpha-aminoacyl-tRNA + H2O = an N-acyl-L-amino acid + a tRNA + H(+). In terms of biological role, hydrolyzes ribosome-free peptidyl-tRNAs (with 1 or more amino acids incorporated), which drop off the ribosome during protein synthesis, or as a result of ribosome stalling. Functionally, catalyzes the release of premature peptidyl moieties from peptidyl-tRNA molecules trapped in stalled 50S ribosomal subunits, and thus maintains levels of free tRNAs and 50S ribosomes. This Caldanaerobacter subterraneus subsp. tengcongensis (strain DSM 15242 / JCM 11007 / NBRC 100824 / MB4) (Thermoanaerobacter tengcongensis) protein is Peptidyl-tRNA hydrolase.